Here is a 350-residue protein sequence, read N- to C-terminus: Inhibin beta E chain (350 aa).

The signal sequence occupies residues 1–19 (MRLPDVQLWLVLLWALVRA). A propeptide spanning residues 20 to 236 (QGTGSVCPSC…EPGAGRARRR (217 aa)) is cleaved from the precursor. A glycan (N-linked (GlcNAc...) asparagine) is linked at N198. 4 disulfide bridges follow: C240/C248, C247/C315, C276/C347, and C280/C349.

The protein belongs to the TGF-beta family. In terms of assembly, homodimeric or heterodimeric through association with alpha and beta subunits, linked by one or more disulfide bonds. Inhibins are heterodimers of one alpha and one beta subunit. Activins are homo- or heterodimers of beta subunits only.

The protein resides in the secreted. Inhibins and activins inhibit and activate, respectively, the secretion of follitropin by the pituitary gland. Inhibins/activins are involved in regulating a number of diverse functions such as hypothalamic and pituitary hormone secretion, gonadal hormone secretion, germ cell development and maturation, erythroid differentiation, insulin secretion, nerve cell survival, embryonic axial development or bone growth, depending on their subunit composition. Inhibins appear to oppose the functions of activins. Its function is as follows. Activin E is a homodimer of INHBE secreted by the liver that plays a crucial role in regulating metabolic homeostasis particularly in lipid metabolism and energy homeostasis. Plays a central role in the regulation of adipose tissue lipolysis by preventing the influx of fatty acids from adipose tissue into the liver. Mechanistically, signals via ACVR1C to activate SMAD2/3 signaling, suppressing PPARG target genes in adipose tissue, thereby reducing liver lipid content and improving glycemic control. Induces beige adipocyte formation and thermogenesis in response to cold exposure. This chain is Inhibin beta E chain (INHBE), found in Homo sapiens (Human).